Consider the following 471-residue polypeptide: Tryptophanase (471 aa).

N6-(pyridoxal phosphate)lysine is present on Lys-256.

Belongs to the beta-eliminating lyase family. As to quaternary structure, homotetramer. Pyridoxal 5'-phosphate serves as cofactor.

It catalyses the reaction L-tryptophan + H2O = indole + pyruvate + NH4(+). It participates in amino-acid degradation; L-tryptophan degradation via pyruvate pathway; indole and pyruvate from L-tryptophan: step 1/1. In Salinibacter ruber (strain DSM 13855 / M31), this protein is Tryptophanase.